Consider the following 483-residue polypeptide: 6-phosphogluconate dehydrogenase, decarboxylating (483 aa).

NADP(+) is bound by residues 10-15 (GLAVMG) and 33-35 (NRT). K38 is subject to N6-acetyllysine. Phosphoserine is present on S57. K59 bears the N6-acetyllysine mark. NADP(+) contacts are provided by residues 75 to 77 (VKA) and N103. Substrate contacts are provided by residues N103 and 129–131 (SGG). Position 129 is a phosphoserine (S129). K184 (proton acceptor) is an active-site residue. 187–188 (HN) provides a ligand contact to substrate. E191 serves as the catalytic Proton donor. 5 residues coordinate substrate: Y192, K261, R288, R447, and H453. 478-481 (SSSY) provides a ligand contact to NADP(+).

It belongs to the 6-phosphogluconate dehydrogenase family. As to quaternary structure, homodimer.

It localises to the cytoplasm. It catalyses the reaction 6-phospho-D-gluconate + NADP(+) = D-ribulose 5-phosphate + CO2 + NADPH. It functions in the pathway carbohydrate degradation; pentose phosphate pathway; D-ribulose 5-phosphate from D-glucose 6-phosphate (oxidative stage): step 3/3. In terms of biological role, catalyzes the oxidative decarboxylation of 6-phosphogluconate to ribulose 5-phosphate and CO(2), with concomitant reduction of NADP to NADPH. The polypeptide is 6-phosphogluconate dehydrogenase, decarboxylating (Rattus norvegicus (Rat)).